Consider the following 101-residue polypeptide: Urease subunit beta (101 aa).

The protein belongs to the urease beta subunit family. As to quaternary structure, heterotrimer of UreA (gamma), UreB (beta) and UreC (alpha) subunits. Three heterotrimers associate to form the active enzyme.

Its subcellular location is the cytoplasm. The catalysed reaction is urea + 2 H2O + H(+) = hydrogencarbonate + 2 NH4(+). The protein operates within nitrogen metabolism; urea degradation; CO(2) and NH(3) from urea (urease route): step 1/1. This chain is Urease subunit beta, found in Polaromonas naphthalenivorans (strain CJ2).